We begin with the raw amino-acid sequence, 341 residues long: NADH-quinone oxidoreductase subunit H 1 (341 aa).

A run of 8 helical transmembrane segments spans residues 13 to 33 (LVVI…IAYI), 82 to 102 (GLFL…WAVI), 115 to 135 (VGVL…IMAG), 161 to 181 (IGFV…TAIV), 190 to 210 (MLGW…VSAL), 248 to 268 (YVAI…GWLP), 277 to 297 (WVPG…LFAM), and 313 to 333 (LGWK…ASVL).

Belongs to the complex I subunit 1 family. NDH-1 is composed of 14 different subunits. Subunits NuoA, H, J, K, L, M, N constitute the membrane sector of the complex.

The protein localises to the cell inner membrane. The enzyme catalyses a quinone + NADH + 5 H(+)(in) = a quinol + NAD(+) + 4 H(+)(out). NDH-1 shuttles electrons from NADH, via FMN and iron-sulfur (Fe-S) centers, to quinones in the respiratory chain. The immediate electron acceptor for the enzyme in this species is believed to be ubiquinone. Couples the redox reaction to proton translocation (for every two electrons transferred, four hydrogen ions are translocated across the cytoplasmic membrane), and thus conserves the redox energy in a proton gradient. This subunit may bind ubiquinone. The polypeptide is NADH-quinone oxidoreductase subunit H 1 (Rhodopseudomonas palustris (strain ATCC BAA-98 / CGA009)).